The sequence spans 997 residues: Translation initiation factor IF-2 (997 aa).

A disordered region spans residues 101 to 409 (ELAAEQAAAR…QHQDRRHEQV (309 aa)). Composition is skewed to low complexity over residues 116–185 (AEAV…QAEP), 195–208 (AAPAQAVAEPVEPA), and 244–280 (PSAPAESPKSAKAEPAAAPKTTAKPGEIRRAAAPAAP). Residues 281 to 292 (DRAREEARRAAE) show a composition bias toward basic and acidic residues. Positions 385 to 394 (RAGGKGGRGG) are enriched in gly residues. Residues 400–409 (QHQDRRHEQV) show a composition bias toward basic and acidic residues. Residues 498 to 665 (PRAPVVTVMG…NVLLQAEILE (168 aa)) form the tr-type G domain. The G1 stretch occupies residues 507-514 (GHVDHGKT). 507-514 (GHVDHGKT) contributes to the GTP binding site. Residues 532–536 (GITQH) are G2. The interval 553–556 (DTPG) is G3. Residues 553–557 (DTPGH) and 607–610 (NKID) contribute to the GTP site. Residues 607 to 610 (NKID) form a G4 region. The G5 stretch occupies residues 643 to 645 (SAK).

This sequence belongs to the TRAFAC class translation factor GTPase superfamily. Classic translation factor GTPase family. IF-2 subfamily.

The protein localises to the cytoplasm. In terms of biological role, one of the essential components for the initiation of protein synthesis. Protects formylmethionyl-tRNA from spontaneous hydrolysis and promotes its binding to the 30S ribosomal subunits. Also involved in the hydrolysis of GTP during the formation of the 70S ribosomal complex. This is Translation initiation factor IF-2 from Bordetella bronchiseptica (strain ATCC BAA-588 / NCTC 13252 / RB50) (Alcaligenes bronchisepticus).